The chain runs to 108 residues: Integration host factor subunit alpha (108 aa).

It belongs to the bacterial histone-like protein family. In terms of assembly, heterodimer of an alpha and a beta chain.

Functionally, this protein is one of the two subunits of integration host factor, a specific DNA-binding protein that functions in genetic recombination as well as in transcriptional and translational control. The chain is Integration host factor subunit alpha from Methylorubrum extorquens (strain CM4 / NCIMB 13688) (Methylobacterium extorquens).